We begin with the raw amino-acid sequence, 407 residues long: Imidazolonepropionase (407 aa).

Residues H75 and H77 each coordinate Fe(3+). The Zn(2+) site is built by H75 and H77. Residues R84, Y147, and H180 each coordinate 4-imidazolone-5-propanoate. Y147 contributes to the N-formimidoyl-L-glutamate binding site. A Fe(3+)-binding site is contributed by H245. Position 245 (H245) interacts with Zn(2+). Residue Q248 coordinates 4-imidazolone-5-propanoate. Position 320 (D320) interacts with Fe(3+). Zn(2+) is bound at residue D320. N-formimidoyl-L-glutamate is bound by residues N322 and G324. Position 325 (S325) interacts with 4-imidazolone-5-propanoate.

Belongs to the metallo-dependent hydrolases superfamily. HutI family. Zn(2+) is required as a cofactor. The cofactor is Fe(3+).

It localises to the cytoplasm. It catalyses the reaction 4-imidazolone-5-propanoate + H2O = N-formimidoyl-L-glutamate. It functions in the pathway amino-acid degradation; L-histidine degradation into L-glutamate; N-formimidoyl-L-glutamate from L-histidine: step 3/3. Functionally, catalyzes the hydrolytic cleavage of the carbon-nitrogen bond in imidazolone-5-propanoate to yield N-formimidoyl-L-glutamate. It is the third step in the universal histidine degradation pathway. This Pseudoalteromonas atlantica (strain T6c / ATCC BAA-1087) protein is Imidazolonepropionase.